Here is a 488-residue protein sequence, read N- to C-terminus: MAEAKPRNLRIVMFPFMGQGHIIPFVALALRLEKIMIMNRANKTTISMINTPSNIPKIRSNLPPESSISLIELPFNSSDHGLPHDGENFDSLPYSLVISLLEASRSLREPFRDFMTKILKEEGQSSVIVIGDFFLGWIGKVCKEVGVYSVIFSASGAFGLGCYRSIWLNLPHKETKQDQFLLDDFPEAGEIEKTQLNSFMLEADGTDDWSVFMKKIIPGWSDFDGFLFNTVAEIDQMGLSYFRRITGVPVWPVGPVLKSPDKKVGSRSTEEAVKSWLDSKPDHSVVYVCFGSMNSILQTHMLELAMALESSEKNFIWVVRPPIGVEVKSEFDVKGYLPEGFEERITRSERGLLVKKWAPQVDILSHKATCVFLSHCGWNSILESLSHGVPLLGWPMAAEQFFNSILMEKHIGVSVEVARGKRCEIKCDDIVSKIKLVMEETEVGKEIRKKAREVKELVRRAMVDGVKGSSVIGLEEFLDQAMVKKVEN.

UDP-alpha-D-glucose is bound by residues serine 292, 358–360 (APQ), 375–383 (HCGWNSILE), and 397–400 (AAEQ).

The protein belongs to the UDP-glycosyltransferase family.

This is UDP-glycosyltransferase 92A1 (UGT92A1) from Arabidopsis thaliana (Mouse-ear cress).